An 859-amino-acid chain; its full sequence is Kinesin-like protein KIN-14T (859 aa).

The Kinesin motor domain occupies 91–411 (NIRVFCRVKP…LNFATRAKNI (321 aa)). 168 to 175 (GQTGTGKT) is a binding site for ATP. A coiled-coil region spans residues 422–463 (QAKKEAVMMNLQKMMEKIEQEREMSLRKMRNLNETLEKLTGK). Residues 511-530 (LSGADFSVTPNSSSFKSRRN) form a disordered region. The segment covering 518–530 (VTPNSSSFKSRRN) has biased composition (polar residues).

Belongs to the TRAFAC class myosin-kinesin ATPase superfamily. Kinesin family. KIN-14 subfamily.

This is Kinesin-like protein KIN-14T from Arabidopsis thaliana (Mouse-ear cress).